Here is a 153-residue protein sequence, read N- to C-terminus: MPYSTFPLLWVLGLLALSSACYIQNCPRGGKRSFPDLPRQCMSCGPGDRGRCFGPNICCGEGMGCYMGSPEAAGCVEENYLPSPCEAGGRVCGSEGSCAASGVCCDSESCVLDPDCLEDSKRQSPSEQNAALMGGLAGDLLRILHATSRGRPQ.

Positions 1-20 (MPYSTFPLLWVLGLLALSSA) are cleaved as a signal peptide. The cysteines at positions 21 and 26 are disulfide-linked. Position 29 is a glycine amide (Gly29). Disulfide bonds link Cys41/Cys85, Cys44/Cys58, Cys52/Cys75, Cys59/Cys65, Cys92/Cys104, Cys98/Cys116, and Cys105/Cys110.

It belongs to the vasopressin/oxytocin family. Post-translationally, seven disulfide bonds are present in neurophysin.

It is found in the secreted. Its function is as follows. Vasotocin is an antidiuretic hormone. In Oncorhynchus keta (Chum salmon), this protein is Vasotocin-neurophysin VT 1.